The primary structure comprises 428 residues: Somatostatin receptor type 3 (428 aa).

The Extracellular segment spans residues 1–45; the sequence is MAAVTYPSSVPTTLDPGNASSAWPLDTSLGNASAGTSLAGLAVSG. Residues N18 and N31 are each glycosylated (N-linked (GlcNAc...) asparagine). Residues 46-71 traverse the membrane as a helical segment; it reads ILISLVYLVVCVVGLLGNSLVIYVVL. Topologically, residues 72-81 are cytoplasmic; it reads RHTSSPSVTS. The helical transmembrane segment at 82–103 threads the bilayer; the sequence is VYILNLALADELFMLGLPFLAA. Residues 104–118 lie on the Extracellular side of the membrane; the sequence is QNALSYWPFGSLMCR. C117 and C192 are oxidised to a cystine. The helical transmembrane segment at 119 to 140 threads the bilayer; that stretch reads LVMAVDGINQFTSIFCLTVMSV. The Cytoplasmic segment spans residues 141–162; it reads DRYLAVVHPTRSARWRTAPVAR. A helical transmembrane segment spans residues 163–182; sequence MVSAAVWVASAVVVLPVVVF. Over 183 to 206 the chain is Extracellular; it reads SGVPRGMSTCHMQWPEPAAAWRTA. Residues 207 to 232 traverse the membrane as a helical segment; it reads FIIYTAALGFFGPLLVICLCYLLIVV. Over 233–266 the chain is Cytoplasmic; it reads KVRSTTRRVRAPSCQWVQAPACQRRRRSERRVTR. The helical transmembrane segment at 267–288 threads the bilayer; sequence MVVAVVALFVLCWMPFYLLNIV. The Extracellular portion of the chain corresponds to 289–302; sequence NVVCPLPEEPAFFG. Residues 303–325 traverse the membrane as a helical segment; that stretch reads LYFLVVALPYANSCANPILYGFL. Over 326–428 the chain is Cytoplasmic; that stretch reads SYRFKQGFRR…GDKASTLSHL (103 aa). S341, S346, and S351 each carry phosphoserine. Residues 343 to 428 form a disordered region; it reads RVRSQEPGSG…GDKASTLSHL (86 aa). T357 bears the Phosphothreonine mark. Positions 357-370 are enriched in acidic residues; the sequence is TEEEEDEEEEERRE. Residues 385-412 are compositionally biased toward polar residues; sequence RLSQIAQPGPSGQQQRPCTGTAKEQQLL.

It belongs to the G-protein coupled receptor 1 family. Homodimer and heterodimer with SSTR2. Heterodimerization with SSTR2 inactivates SSTR3 receptor function. Phosphorylated. Phosphorylation increases upon somatostatin binding. In terms of tissue distribution, densely expressed in cerebellum and at moderate levels in the amygdala, cortex, striatum, spleen, liver and pituitary.

It is found in the cell membrane. Its function is as follows. Receptor for somatostatin-14 and -28. This receptor is coupled via pertussis toxin sensitive G proteins to inhibition of adenylyl cyclase. In Rattus norvegicus (Rat), this protein is Somatostatin receptor type 3 (Sstr3).